The primary structure comprises 150 residues: Putative F-box protein At2g33655 (150 aa).

Positions 1–47 constitute an F-box domain; the sequence is MEKMSDLPRELVEEILSRVPVKSMREVRVTCKTWNALSKHISKAEAA.

This chain is Putative F-box protein At2g33655, found in Arabidopsis thaliana (Mouse-ear cress).